The chain runs to 689 residues: Beta-adrenergic receptor kinase 1 (689 aa).

The interval 1 to 190 is N-terminal; it reads MADLEAVLAD…ELNIHLTMND (190 aa). One can recognise an RGS domain in the interval 54-175; it reads TFEKIFSQKL…IESDKFTRFC (122 aa). The 263-residue stretch at 191-453 folds into the Protein kinase domain; the sequence is FSVHRIIGRG…AQEIKESPFF (263 aa). ATP contacts are provided by residues 197–205 and lysine 220; that span reads IGRGGFGEV. The active-site Proton acceptor is aspartate 317. An AGC-kinase C-terminal domain is found at 454–521; that stretch reads RSLDWQMVFL…TISERWQQEV (68 aa). The PH domain maps to 558-652; sequence DCIMHGYMSK…WKKELRDAYR (95 aa). Phosphoserine is present on serine 670.

Belongs to the protein kinase superfamily. AGC Ser/Thr protein kinase family. GPRK subfamily. As to quaternary structure, interacts with the heterodimer formed by GNB1 and GNG2. Interacts with GIT1. Interacts with, and phosphorylates chemokine-stimulated CCR5. Interacts with ARRB1. Interacts with LPAR1 and LPAR2. Interacts with RALA in response to LPAR1 activation. ADRBK1 and RALA mutually inhibit each other's binding to LPAR1. Interacts with ADRB2. As to expression, expressed at low levels in brain cortex, hippocampus, striatum, hypothalamus, cerebellum and brainstem (at protein level).

It is found in the cytoplasm. Its subcellular location is the cell membrane. It localises to the postsynapse. The protein resides in the presynapse. The enzyme catalyses [beta-adrenergic receptor] + ATP = [beta-adrenergic receptor]-phosphate + ADP + H(+). Its activity is regulated as follows. In contrast to other AGC family kinases, the catalytic activity is solely regulated by the binding of substrates and ligands, not by phosphorylation of the kinase domain. Its function is as follows. Specifically phosphorylates the agonist-occupied form of the beta-adrenergic and closely related receptors, probably inducing a desensitization of them. Key regulator of LPAR1 signaling. Competes with RALA for binding to LPAR1 thus affecting the signaling properties of the receptor. Desensitizes LPAR1 and LPAR2 in a phosphorylation-independent manner. Positively regulates ciliary smoothened (SMO)-dependent Hedgehog (Hh) signaling pathway by facilitating the trafficking of SMO into the cilium and the stimulation of SMO activity. Inhibits relaxation of airway smooth muscle in response to blue light. This is Beta-adrenergic receptor kinase 1 from Rattus norvegicus (Rat).